We begin with the raw amino-acid sequence, 273 residues long: Urease accessory protein UreD (273 aa).

Residues 1-29 (MLMRTATPLDQPRAIGSARVSSKRVNGGS) are disordered.

Belongs to the UreD family. As to quaternary structure, ureD, UreF and UreG form a complex that acts as a GTP-hydrolysis-dependent molecular chaperone, activating the urease apoprotein by helping to assemble the nickel containing metallocenter of UreC. The UreE protein probably delivers the nickel.

The protein resides in the cytoplasm. Required for maturation of urease via the functional incorporation of the urease nickel metallocenter. The polypeptide is Urease accessory protein UreD (Roseobacter denitrificans (strain ATCC 33942 / OCh 114) (Erythrobacter sp. (strain OCh 114))).